The following is a 93-amino-acid chain: UPF0147 protein MJ1419 (93 aa).

Belongs to the UPF0147 family.

This Methanocaldococcus jannaschii (strain ATCC 43067 / DSM 2661 / JAL-1 / JCM 10045 / NBRC 100440) (Methanococcus jannaschii) protein is UPF0147 protein MJ1419.